Consider the following 266-residue polypeptide: ATP synthase subunit a (266 aa).

5 helical membrane-spanning segments follow: residues 33–53 (FWTLNIDSMFFSVVLGLLFLA), 95–115 (VIAPLALTVFVWVFLMNLMDL), 141–161 (DVNITLSMALGVFILIIFYSI), 206–226 (LFGNMYAGELIFILIAGLLPW), and 237–257 (AIFHILIITLQAFIFMVLTIV).

It belongs to the ATPase A chain family. As to quaternary structure, F-type ATPases have 2 components, CF(1) - the catalytic core - and CF(0) - the membrane proton channel. CF(1) has five subunits: alpha(3), beta(3), gamma(1), delta(1), epsilon(1). CF(0) has three main subunits: a(1), b(2) and c(9-12). The alpha and beta chains form an alternating ring which encloses part of the gamma chain. CF(1) is attached to CF(0) by a central stalk formed by the gamma and epsilon chains, while a peripheral stalk is formed by the delta and b chains.

The protein localises to the cell inner membrane. Key component of the proton channel; it plays a direct role in the translocation of protons across the membrane. In Klebsiella pneumoniae subsp. pneumoniae (strain ATCC 700721 / MGH 78578), this protein is ATP synthase subunit a.